A 427-amino-acid polypeptide reads, in one-letter code: tRNA(Ile)-lysidine synthase (427 aa).

27-32 lines the ATP pocket; sequence SGGVDS.

Belongs to the tRNA(Ile)-lysidine synthase family.

It is found in the cytoplasm. The enzyme catalyses cytidine(34) in tRNA(Ile2) + L-lysine + ATP = lysidine(34) in tRNA(Ile2) + AMP + diphosphate + H(+). Its function is as follows. Ligates lysine onto the cytidine present at position 34 of the AUA codon-specific tRNA(Ile) that contains the anticodon CAU, in an ATP-dependent manner. Cytidine is converted to lysidine, thus changing the amino acid specificity of the tRNA from methionine to isoleucine. This is tRNA(Ile)-lysidine synthase from Streptococcus equi subsp. equi (strain 4047).